The chain runs to 344 residues: KRR1 small subunit processome component homolog (344 aa).

A KH domain is found at 125 to 193 (DIIKIGNLVH…VRDIVLETMN (69 aa)). Positions 232 to 245 (NISKRKQPKVKKQK) are enriched in basic residues. Disordered regions lie at residues 232–260 (NISK…ESKV) and 273–326 (QEQK…TKVD). The stretch at 270-295 (FLNQEQKQAKRNQGRTEKQKEAAKRQ) forms a coiled coil. 2 stretches are compositionally biased toward basic and acidic residues: residues 283-302 (GRTE…RNKD) and 315-326 (RKKEDGSSTKVD).

This sequence belongs to the KRR1 family. In terms of assembly, monomer. Component of the ribosomal small subunit (SSU) processome.

It is found in the nucleus. The protein localises to the nucleolus. Its function is as follows. Required for 40S ribosome biogenesis. Involved in nucleolar processing of pre-18S ribosomal RNA and ribosome assembly. Binds to RNA. Required for female germline development, cell viability during eye development and for survival of dividing cells and epithelial cells during early wing disk development. The polypeptide is KRR1 small subunit processome component homolog (Drosophila yakuba (Fruit fly)).